A 212-amino-acid polypeptide reads, in one-letter code: Thymidylate kinase (212 aa).

11 to 18 serves as a coordination point for ATP; that stretch reads GLEGAGKT.

The protein belongs to the thymidylate kinase family.

The enzyme catalyses dTMP + ATP = dTDP + ADP. Functionally, phosphorylation of dTMP to form dTDP in both de novo and salvage pathways of dTTP synthesis. This Buchnera aphidicola subsp. Acyrthosiphon pisum (strain APS) (Acyrthosiphon pisum symbiotic bacterium) protein is Thymidylate kinase (tmk).